Consider the following 535-residue polypeptide: MGPPVHHLLTGLCVGVALGWVGGSVPNLGPAEQEQNHYLAQLFGLYGENGTLTAGGLARLLHSLGLGRVQGLRLGHHEPPTGRAAPTSGDNFTHRLQEPELSVDIWAGMPLGPSGWGDQEESKAPDLHGSGPSSLDLFQRLLLLDHSLADHLNEDCLNGSQLLVNFGLSPVAPLTPRQFALLCPALLYQIDSRVCIKTPAPAPPGDVLSALLHSGLAVLFLSLPAPLSLLLLRLLGPRLLRPVLGFLGALAVGTLCGDALLHLLPHAQGGRHTGPSEQSEEDLGPGLSVLGGLFLLFMLENTLGLVRHRGLRPRCCRNKRDLGEPNPDPEDGSGMVLRPLQAASEPEVQGQRENRQSSPSLAPPGHQGHSHEHRGGSIAWMVLLGDCLHNLTDGLALGAAFSDGFSSGLSTTLAVFCHELPHELGDFAMLLQEGLSFRKLLLLSLVSGALGLGGAALGVGLSLGPVPLTPWVFGTTAGVFLYVALVDMLPTLLRPPEPLPVFHVLLQGLGLLLGGSLMFTIALLEEQLVPTVPDG.

Residues 1-19 form the signal peptide; that stretch reads MGPPVHHLLTGLCVGVALG. At 20–210 the chain is on the extracellular side; the sequence is WVGGSVPNLG…PAPPGDVLSA (191 aa). N-linked (GlcNAc...) asparagine glycans are attached at residues Asn-49 and Asn-158. Residues 211–231 form a helical membrane-spanning segment; that stretch reads LLHSGLAVLFLSLPAPLSLLL. The Cytoplasmic segment spans residues 232-242; it reads LRLLGPRLLRP. The helical transmembrane segment at 243–263 threads the bilayer; the sequence is VLGFLGALAVGTLCGDALLHL. Topologically, residues 264 to 285 are extracellular; the sequence is LPHAQGGRHTGPSEQSEEDLGP. Residues 286 to 306 traverse the membrane as a helical segment; the sequence is GLSVLGGLFLLFMLENTLGLV. Over 307–439 the chain is Cytoplasmic; it reads RHRGLRPRCC…LLQEGLSFRK (133 aa). The disordered stretch occupies residues 316-373; it reads CRNKRDLGEPNPDPEDGSGMVLRPLQAASEPEVQGQRENRQSSPSLAPPGHQGHSHEH. The residue at position 333 (Ser-333) is a Phosphoserine. His-371 is subject to Pros-methylhistidine. Residues 440–460 form a helical membrane-spanning segment; the sequence is LLLLSLVSGALGLGGAALGVG. Over 461-465 the chain is Extracellular; it reads LSLGP. A helical membrane pass occupies residues 466-486; sequence VPLTPWVFGTTAGVFLYVALV. Residues 487-503 lie on the Cytoplasmic side of the membrane; the sequence is DMLPTLLRPPEPLPVFH. A helical membrane pass occupies residues 504 to 524; sequence VLLQGLGLLLGGSLMFTIALL. Residues 525–535 lie on the Extracellular side of the membrane; that stretch reads EEQLVPTVPDG.

It belongs to the ZIP transporter (TC 2.A.5) family. As to quaternary structure, homodimer. In terms of processing, N-Glycosylated. Methylated at His-371 by METTL9. Expressed in all stages of eye development and primarily in the sclera and several layers of the retina, including the inner segment, outer plexiform layer and ganglion cell layer. Expressed in pancreas, kidney and the proximal and distal small intestine as well as in the embryonic visceral yolk sac. In the proximal intestine, expression is predominant in the crypts but diminishes toward the apical regions of the villi.

The protein localises to the basolateral cell membrane. The catalysed reaction is Zn(2+)(in) = Zn(2+)(out). In terms of biological role, uniporter that transports zinc(2+) into polarized cells of enterocytes, pancreatic acinar and endoderm cells across the basolateral membrane and participates, notably, in zinc excretion from the intestine by the uptake of zinc from the blood into the intestine. The transport mechanism is temperature- and concentration-dependent and saturable. In addition, is also a high affinity copper transporter in vitro. Also may regulate glucose-stimulated insulin secretion (GSIS) in islets primarily through the zinc-activated SIRT1-PPARGC1A axis. Could regulate the BMP/TGF-beta (bone morphogenetic protein/transforming growth factor-beta) signaling pathway and modulates extracellular matrix (ECM) proteins of the sclera. Plays a role in eye development. The sequence is that of Zinc transporter ZIP5 from Mus musculus (Mouse).